Here is a 186-residue protein sequence, read N- to C-terminus: Putative manganese efflux pump MntP (186 aa).

The next 6 helical transmembrane spans lie at 3 to 23 (PIAL…AAIG), 39 to 59 (IGII…LIGK), 65 to 85 (VEAW…LHMI), 109 to 129 (CLTA…LAFI), 133 to 153 (IWIA…IGIM), and 166 to 186 (AEIF…YGQL).

Belongs to the MntP (TC 9.B.29) family.

The protein localises to the cell inner membrane. Functionally, probably functions as a manganese efflux pump. The polypeptide is Putative manganese efflux pump MntP (Alcanivorax borkumensis (strain ATCC 700651 / DSM 11573 / NCIMB 13689 / SK2)).